The primary structure comprises 475 residues: Ribulose bisphosphate carboxylase large chain (475 aa).

A propeptide spanning residues Met1–Ser2 is cleaved from the precursor. N-acetylproline is present on Pro3. Lys14 is subject to N6,N6,N6-trimethyllysine. Residues Asn123 and Thr173 each contribute to the substrate site. Lys175 functions as the Proton acceptor in the catalytic mechanism. Position 177 (Lys177) interacts with substrate. Mg(2+)-binding residues include Lys201, Asp203, and Glu204. Lys201 carries the post-translational modification N6-carboxylysine. His294 functions as the Proton acceptor in the catalytic mechanism. Substrate-binding residues include Arg295, His327, and Ser379.

The protein belongs to the RuBisCO large chain family. Type I subfamily. Heterohexadecamer of 8 large chains and 8 small chains. Mg(2+) is required as a cofactor.

The protein localises to the plastid. It is found in the chloroplast. The enzyme catalyses 2 (2R)-3-phosphoglycerate + 2 H(+) = D-ribulose 1,5-bisphosphate + CO2 + H2O. The catalysed reaction is D-ribulose 1,5-bisphosphate + O2 = 2-phosphoglycolate + (2R)-3-phosphoglycerate + 2 H(+). Its function is as follows. RuBisCO catalyzes two reactions: the carboxylation of D-ribulose 1,5-bisphosphate, the primary event in carbon dioxide fixation, as well as the oxidative fragmentation of the pentose substrate in the photorespiration process. Both reactions occur simultaneously and in competition at the same active site. The polypeptide is Ribulose bisphosphate carboxylase large chain (Chlorella vulgaris (Green alga)).